Here is a 1377-residue protein sequence, read N- to C-terminus: DNA-directed RNA polymerase subunit beta' (1377 aa).

Zn(2+) contacts are provided by cysteine 60, cysteine 62, cysteine 75, and cysteine 78. Mg(2+)-binding residues include aspartate 449, aspartate 451, and aspartate 453. Zn(2+)-binding residues include cysteine 777, cysteine 851, cysteine 858, and cysteine 861.

The protein belongs to the RNA polymerase beta' chain family. The RNAP catalytic core consists of 2 alpha, 1 beta, 1 beta' and 1 omega subunit. When a sigma factor is associated with the core the holoenzyme is formed, which can initiate transcription. Requires Mg(2+) as cofactor. The cofactor is Zn(2+).

The enzyme catalyses RNA(n) + a ribonucleoside 5'-triphosphate = RNA(n+1) + diphosphate. In terms of biological role, DNA-dependent RNA polymerase catalyzes the transcription of DNA into RNA using the four ribonucleoside triphosphates as substrates. The protein is DNA-directed RNA polymerase subunit beta' of Borreliella burgdorferi (strain ZS7) (Borrelia burgdorferi).